Here is a 65-residue protein sequence, read N- to C-terminus: Large ribosomal subunit protein bL31 (65 aa).

Cys-16, Cys-18, Cys-36, and Cys-39 together coordinate Zn(2+).

It belongs to the bacterial ribosomal protein bL31 family. Type A subfamily. As to quaternary structure, part of the 50S ribosomal subunit. The cofactor is Zn(2+).

Functionally, binds the 23S rRNA. In Geobacter sulfurreducens (strain ATCC 51573 / DSM 12127 / PCA), this protein is Large ribosomal subunit protein bL31.